We begin with the raw amino-acid sequence, 380 residues long: Cytochrome b (380 aa).

4 helical membrane passes run 33–53, 77–98, 113–133, and 178–198; these read FGSL…FLAM, WLIR…FLHV, WNMG…GYVL, and FFAF…VHLL. Positions 83 and 97 each coordinate heme b. The heme b site is built by H182 and H196. H201 provides a ligand contact to a ubiquinone. Transmembrane regions (helical) follow at residues 226 to 246, 288 to 308, 320 to 340, and 347 to 367; these read IKDF…TLFF, LGGV…PLLH, ITQT…WIGG, and FIII…ILMP.

It belongs to the cytochrome b family. The cytochrome bc1 complex contains 11 subunits: 3 respiratory subunits (MT-CYB, CYC1 and UQCRFS1), 2 core proteins (UQCRC1 and UQCRC2) and 6 low-molecular weight proteins (UQCRH/QCR6, UQCRB/QCR7, UQCRQ/QCR8, UQCR10/QCR9, UQCR11/QCR10 and a cleavage product of UQCRFS1). This cytochrome bc1 complex then forms a dimer. Heme b serves as cofactor.

It is found in the mitochondrion inner membrane. Component of the ubiquinol-cytochrome c reductase complex (complex III or cytochrome b-c1 complex) that is part of the mitochondrial respiratory chain. The b-c1 complex mediates electron transfer from ubiquinol to cytochrome c. Contributes to the generation of a proton gradient across the mitochondrial membrane that is then used for ATP synthesis. The sequence is that of Cytochrome b (MT-CYB) from Microtus guentheri (Gunther's vole).